The following is a 133-amino-acid chain: Large ribosomal subunit protein bL19 (133 aa).

The protein belongs to the bacterial ribosomal protein bL19 family.

In terms of biological role, this protein is located at the 30S-50S ribosomal subunit interface and may play a role in the structure and function of the aminoacyl-tRNA binding site. The sequence is that of Large ribosomal subunit protein bL19 from Sulfurihydrogenibium sp. (strain YO3AOP1).